We begin with the raw amino-acid sequence, 129 residues long: Large ribosomal subunit protein bL17 (129 aa).

Belongs to the bacterial ribosomal protein bL17 family. In terms of assembly, part of the 50S ribosomal subunit. Contacts protein L32.

The sequence is that of Large ribosomal subunit protein bL17 from Yersinia enterocolitica serotype O:8 / biotype 1B (strain NCTC 13174 / 8081).